Reading from the N-terminus, the 112-residue chain is MKKVEAIIRPEKLEIVKKALSDAGYVGMTVSEVKGRGVQGGIVERYRGREYIVDLIPKVKIELVVKEEDVDNVIDIICENARTGNPGDGKIFVIPVERVVRVRTKEEGRDVL.

ADP-binding positions include Thr29, 37–39, Val64, and 87–90; these read GVQ and GDGK. Residues Thr29, 37-39, Val64, and 87-90 each bind ATP; these read GVQ and GDGK.

This sequence belongs to the P(II) protein family. Homotrimer. Interacts and forms a complex with Amt2.

The protein localises to the cytoplasm. Its function is as follows. Involved in the regulation of nitrogen metabolism. Regulates the activity of its targets by protein-protein interaction in response to the nitrogen status of the cell. Regulates the activity of the ammonia channel Amt2 via direct interaction. The protein is Nitrogen regulatory protein GlnK2 of Methanocaldococcus jannaschii (strain ATCC 43067 / DSM 2661 / JAL-1 / JCM 10045 / NBRC 100440) (Methanococcus jannaschii).